A 442-amino-acid chain; its full sequence is Inhibitor of Apoptosis OPG037 (442 aa).

6 ANK repeats span residues 67 to 96 (DGNY…DPNA), 100 to 131 (HNKT…KINN), 203 to 233 (DGNT…DVNK), 237 to 267 (FGDS…VITD), 292 to 321 (YDST…ICED), and 323 to 347 (MYYA…SVDS).

It belongs to the orthopoxvirus OPG037 family. May interact with host caspase-9-Apaf-1 complex.

The protein resides in the host cytoplasm. Its function is as follows. Inhibits host apoptosis. Acts by associating with host apoptosome. The protein is Inhibitor of Apoptosis OPG037 (OPG037) of Monkeypox virus.